The following is a 338-amino-acid chain: GTPase Obg (338 aa).

The 159-residue stretch at 1–159 (MSFIDEVKIH…RWLRLELKLM (159 aa)) folds into the Obg domain. Residues 160 to 331 (ADVGLLGMPS…LLDEIARQLW (172 aa)) form the OBG-type G domain. Residues 166 to 173 (GMPSVGKS), 191 to 195 (FTTLK), 213 to 216 (DIPG), 283 to 286 (NKMD), and 312 to 314 (SAA) each bind GTP. Residues Ser-173 and Thr-193 each contribute to the Mg(2+) site.

The protein belongs to the TRAFAC class OBG-HflX-like GTPase superfamily. OBG GTPase family. Monomer. Mg(2+) serves as cofactor.

The protein localises to the cytoplasm. In terms of biological role, an essential GTPase which binds GTP, GDP and possibly (p)ppGpp with moderate affinity, with high nucleotide exchange rates and a fairly low GTP hydrolysis rate. Plays a role in control of the cell cycle, stress response, ribosome biogenesis and in those bacteria that undergo differentiation, in morphogenesis control. The polypeptide is GTPase Obg (Geotalea daltonii (strain DSM 22248 / JCM 15807 / FRC-32) (Geobacter daltonii)).